A 496-amino-acid polypeptide reads, in one-letter code: Probable malate:quinone oxidoreductase (496 aa).

This sequence belongs to the MQO family. FAD is required as a cofactor.

It catalyses the reaction (S)-malate + a quinone = a quinol + oxaloacetate. It functions in the pathway carbohydrate metabolism; tricarboxylic acid cycle; oxaloacetate from (S)-malate (quinone route): step 1/1. This is Probable malate:quinone oxidoreductase from Prochlorococcus marinus (strain NATL2A).